We begin with the raw amino-acid sequence, 146 residues long: Aspartate carbamoyltransferase regulatory chain (146 aa).

Zn(2+) contacts are provided by Cys102, Cys107, Cys131, and Cys134.

It belongs to the PyrI family. In terms of assembly, contains catalytic and regulatory chains. Zn(2+) is required as a cofactor.

Involved in allosteric regulation of aspartate carbamoyltransferase. The chain is Aspartate carbamoyltransferase regulatory chain from Clostridium acetobutylicum (strain ATCC 824 / DSM 792 / JCM 1419 / IAM 19013 / LMG 5710 / NBRC 13948 / NRRL B-527 / VKM B-1787 / 2291 / W).